Here is a 621-residue protein sequence, read N- to C-terminus: MBT domain-containing protein 1 (621 aa).

Positions methionine 1–serine 21 are enriched in basic and acidic residues. The tract at residues methionine 1 to leucine 55 is disordered. Residues aspartate 29–serine 41 show a composition bias toward low complexity. Residues proline 68 to arginine 103 form an FCS-type zinc finger. 4 residues coordinate Zn(2+): cysteine 77, cysteine 80, cysteine 97, and cysteine 101. 4 MBT repeats span residues phenylalanine 164–proline 268, threonine 276–arginine 373, phenylalanine 374–proline 479, and phenylalanine 487–proline 583. Positions glutamine 581–proline 621 are disordered. Over residues lysine 597–proline 621 the composition is skewed to basic residues.

As to quaternary structure, monomer. Component of the NuA4 histone acetyltransferase complex.

The protein localises to the nucleus. The protein resides in the chromosome. Its function is as follows. Chromatin reader component of the NuA4 histone acetyltransferase complex, a multiprotein complex involved in transcriptional activation of select genes principally by acetylation of nucleosomal histones H4 and H2A. The NuA4 complex plays a direct role in repair of DNA double-strand breaks (DSBs) by promoting homologous recombination (HR). MBTD1 specifically recognizes and binds monomethylated and dimethylated 'Lys-20' on histone H4 (H4K20me1 and H4K20me2, respectively). In the NuA4 complex, MBTD1 promotes recruitment of the complex to H4K20me marks by competing with TP53BP1 for binding to H4K20me. Following recruitment to H4K20me at DNA breaks, the NuA4 complex catalyzes acetylation of 'Lys-15' on histone H2A (H2AK15), blocking the ubiquitination mark required for TP53BP1 localization at DNA breaks, thereby promoting homologous recombination (HR). In Xenopus laevis (African clawed frog), this protein is MBT domain-containing protein 1.